Here is a 453-residue protein sequence, read N- to C-terminus: tRNA modification GTPase MnmE (453 aa).

Residues Arg-22, Glu-79, and Lys-119 each coordinate (6S)-5-formyl-5,6,7,8-tetrahydrofolate. Positions 215–376 (GMKVVIAGRP…LKLHLKSLMG (162 aa)) constitute a TrmE-type G domain. Asn-225 contacts K(+). Residues 225–230 (NAGKSS), 244–250 (TEIAGTT), 269–272 (DTAG), and 334–337 (NKAD) contribute to the GTP site. Mg(2+) is bound at residue Ser-229. K(+)-binding residues include Thr-244, Ile-246, and Thr-249. Thr-250 serves as a coordination point for Mg(2+). Lys-453 lines the (6S)-5-formyl-5,6,7,8-tetrahydrofolate pocket.

It belongs to the TRAFAC class TrmE-Era-EngA-EngB-Septin-like GTPase superfamily. TrmE GTPase family. As to quaternary structure, homodimer. Heterotetramer of two MnmE and two MnmG subunits. The cofactor is K(+).

The protein localises to the cytoplasm. Functionally, exhibits a very high intrinsic GTPase hydrolysis rate. Involved in the addition of a carboxymethylaminomethyl (cmnm) group at the wobble position (U34) of certain tRNAs, forming tRNA-cmnm(5)s(2)U34. The polypeptide is tRNA modification GTPase MnmE (Shewanella sp. (strain W3-18-1)).